A 936-amino-acid chain; its full sequence is Sine oculis-binding protein homolog A (936 aa).

A compositionally biased stretch (basic and acidic residues) spans 1–14 (MAEMEKEGRPPESK). 2 disordered regions span residues 1–46 (MAEM…GQAG) and 108–151 (ASTL…HGGL). Polar residues predominate over residues 108-144 (ASTLENSSGSPPHANSSGSTPTSRNGVTAESSVNPSS). 2 consecutive FCS-type zinc fingers follow at residues 169–207 (EDSSNVQIMCAWCQKVGVKRYSLSMGSELKSFCSEKCFA) and 247–287 (LKTN…KCLN). 6 disordered regions span residues 311–330 (LPTSDTKSESGAGVQLLTPE), 336–424 (LSEL…VMTP), 486–511 (SPHLHPSSTPTLSGNPPGIMPPHPAA), 574–632 (NPQR…KQTE), 697–727 (PPPALLGETELDGSTSISTGTAKDDHRDTYS), and 842–877 (DSAGKRCSNDQSAITTGTGDDKSQSPEDDPSGEDHA). Over residues 349-382 (GATIAGPSGSTSGSPSEAGTVCSSSSSSSSSSSS) the composition is skewed to low complexity. Over residues 395–404 (SLPPPHPPPI) the composition is skewed to pro residues. Polar residues-rich tracts occupy residues 617–632 (PPNSDTLSPEFSKQTE), 708–717 (DGSTSISTGT), and 850–859 (NDQSAITTGT).

The protein belongs to the SOBP family.

Functionally, implicated in development of the cochlea. This Danio rerio (Zebrafish) protein is Sine oculis-binding protein homolog A (sobpa).